Here is a 486-residue protein sequence, read N- to C-terminus: Adenosylhomocysteinase (486 aa).

Residues T63, D147, and E209 each coordinate substrate. 210–212 (TTT) contributes to the NAD(+) binding site. Substrate-binding residues include K239 and D243. Residues N244, 273 to 278 (GYGDVG), E296, N331, 352 to 354 (IGH), and N400 each bind NAD(+).

Belongs to the adenosylhomocysteinase family. Requires NAD(+) as cofactor.

The enzyme catalyses S-adenosyl-L-homocysteine + H2O = L-homocysteine + adenosine. Its pathway is amino-acid biosynthesis; L-homocysteine biosynthesis; L-homocysteine from S-adenosyl-L-homocysteine: step 1/1. In terms of biological role, adenosylhomocysteine is a competitive inhibitor of S-adenosyl-L-methionine-dependent methyl transferase reactions; therefore adenosylhomocysteinase may play a key role in the control of methylations via regulation of the intracellular concentration of adenosylhomocysteine. This is Adenosylhomocysteinase from Trichomonas vaginalis.